The primary structure comprises 370 residues: Type II restriction enzyme MjaII (370 aa).

This sequence belongs to the TdeIII type II restriction endonuclease family.

It catalyses the reaction Endonucleolytic cleavage of DNA to give specific double-stranded fragments with terminal 5'-phosphates.. A P subtype restriction enzyme that recognizes the double-stranded sequence 5'-GGNCC-3'; the cleavage site is unknown. The chain is Type II restriction enzyme MjaII (mjaIIR) from Methanocaldococcus jannaschii (strain ATCC 43067 / DSM 2661 / JAL-1 / JCM 10045 / NBRC 100440) (Methanococcus jannaschii).